The chain runs to 118 residues: Large ribosomal subunit protein bL20 (118 aa).

The protein belongs to the bacterial ribosomal protein bL20 family.

In terms of biological role, binds directly to 23S ribosomal RNA and is necessary for the in vitro assembly process of the 50S ribosomal subunit. It is not involved in the protein synthesizing functions of that subunit. This chain is Large ribosomal subunit protein bL20, found in Staphylococcus carnosus (strain TM300).